Consider the following 572-residue polypeptide: Proline--tRNA ligase (572 aa).

Belongs to the class-II aminoacyl-tRNA synthetase family. ProS type 1 subfamily. Homodimer.

It localises to the cytoplasm. The enzyme catalyses tRNA(Pro) + L-proline + ATP = L-prolyl-tRNA(Pro) + AMP + diphosphate. Its function is as follows. Catalyzes the attachment of proline to tRNA(Pro) in a two-step reaction: proline is first activated by ATP to form Pro-AMP and then transferred to the acceptor end of tRNA(Pro). As ProRS can inadvertently accommodate and process non-cognate amino acids such as alanine and cysteine, to avoid such errors it has two additional distinct editing activities against alanine. One activity is designated as 'pretransfer' editing and involves the tRNA(Pro)-independent hydrolysis of activated Ala-AMP. The other activity is designated 'posttransfer' editing and involves deacylation of mischarged Ala-tRNA(Pro). The misacylated Cys-tRNA(Pro) is not edited by ProRS. The polypeptide is Proline--tRNA ligase (Yersinia pestis bv. Antiqua (strain Antiqua)).